We begin with the raw amino-acid sequence, 477 residues long: Glutamate--tRNA ligase (477 aa).

Positions 8–18 match the 'HIGH' region motif; it reads PSPTGTLHIGT. The short motif at 247–251 is the 'KMSKS' region element; that stretch reads KLSKR. Lysine 250 is an ATP binding site.

It belongs to the class-I aminoacyl-tRNA synthetase family. Glutamate--tRNA ligase type 1 subfamily. Monomer.

It localises to the cytoplasm. It catalyses the reaction tRNA(Glu) + L-glutamate + ATP = L-glutamyl-tRNA(Glu) + AMP + diphosphate. In terms of biological role, catalyzes the attachment of glutamate to tRNA(Glu) in a two-step reaction: glutamate is first activated by ATP to form Glu-AMP and then transferred to the acceptor end of tRNA(Glu). In Synechococcus sp. (strain CC9605), this protein is Glutamate--tRNA ligase.